A 147-amino-acid chain; its full sequence is Large ribosomal subunit protein uL16c (147 aa).

The segment covering 1–17 (MLSPKRTRFRKQHRGRM) has biased composition (basic residues). The disordered stretch occupies residues 1–20 (MLSPKRTRFRKQHRGRMKGI).

Belongs to the universal ribosomal protein uL16 family. Part of the 50S ribosomal subunit.

It localises to the plastid. Its subcellular location is the chloroplast. This is Large ribosomal subunit protein uL16c from Ipomoea purpurea (Common morning glory).